The following is a 57-amino-acid chain: Large ribosomal subunit protein bL32c (57 aa).

This sequence belongs to the bacterial ribosomal protein bL32 family.

The protein resides in the plastid. It localises to the chloroplast. The chain is Large ribosomal subunit protein bL32c from Vitis vinifera (Grape).